We begin with the raw amino-acid sequence, 542 residues long: Esterase S (542 aa).

The N-terminal stretch at 1–22 is a signal peptide; sequence MTQILLPIALLCLFAASTLSNP. Cys81 and Cys100 are oxidised to a cystine. N-linked (GlcNAc...) asparagine glycosylation is present at Asn110. The Acyl-ester intermediate role is filled by Ser204. A disulfide bond links Cys256 and Cys268. Asn396 carries N-linked (GlcNAc...) asparagine glycosylation. Cysteines 507 and 528 form a disulfide.

The protein belongs to the type-B carboxylesterase/lipase family. As to quaternary structure, monomer. As to expression, specifically expressed in the ejaculatory bulbs of male.

Its subcellular location is the secreted. The catalysed reaction is a carboxylic ester + H2O = an alcohol + a carboxylate + H(+). Its function is as follows. Transferred from the ejaculatory bulbs of males to the female genitals upon copulation, plays an important role in the reproductive biology. This Drosophila virilis (Fruit fly) protein is Esterase S (EstS).